We begin with the raw amino-acid sequence, 88 residues long: Phage-like element PBSX protein XkdR (88 aa).

To B.subtilis YqbR.

The chain is Phage-like element PBSX protein XkdR (xkdR) from Bacillus subtilis (strain 168).